A 916-amino-acid chain; its full sequence is Pertactin autotransporter (916 aa).

The first 37 residues, 1–37, serve as a signal peptide directing secretion; the sequence is MNMSLSRIVKAAPLRRTTLAMALGALGALGAAPAAHA. Residues 263 to 265 carry the Cell attachment site; involved in adhesion to various eukaryotic cell lines motif; sequence RGD. Tandem repeats lie at residues 269–273, 274–278, and 279–283. Positions 269 to 288 are 4 X 5 AA tandem repeats of G-G-A-V-P; sequence GGAVPGGAVPGGAVPGGFGP. Residues 284–288 form a 4; approximate repeat; that stretch reads GGFGP. Positions 564 to 613 are disordered; the sequence is SLVGAKAPPAPKPAPQPGPQPGPQPPQPPQPPQRQPEAPAPQPPAGRELS. Residues 571–607 are compositionally biased toward pro residues; the sequence is PPAPKPAPQPGPQPGPQPPQPPQPPQRQPEAPAPQPP. The 6 X 3 AA repeats of P-Q-P stretch occupies residues 578 to 606; that stretch reads PQPGPQPGPQPPQPPQPPQRQPEAPAPQP. In terms of domain architecture, Autotransporter spans 648 to 916; the sequence is LNPDAGGAWG…TFHAGYRYSW (269 aa). The short motif at 706 to 708 is the Cell attachment site element; sequence RGD.

In terms of assembly, monomer.

It is found in the periplasm. Its subcellular location is the secreted. The protein localises to the cell surface. It localises to the cell outer membrane. Functionally, agglutinogen that binds to eukaryotic cells; a process mediated by the R-G-D sequence. Pertactin may have a role in bacterial adhesion, and thus play a role in virulence. May contribute to the disease state of whooping cough. The protein is Pertactin autotransporter (prn) of Bordetella bronchiseptica (strain ATCC BAA-588 / NCTC 13252 / RB50) (Alcaligenes bronchisepticus).